The sequence spans 797 residues: Trafficking protein particle complex subunit 12 (797 aa).

2 disordered regions span residues 1 to 257 and 286 to 338; these read META…PSLS and SNPN…VPES. The span at 9–23 shows a compositional bias: low complexity; that stretch reads QSPSEASPSAQAGPE. Positions 29–43 are enriched in basic and acidic residues; it reads MSREEESQPLYHEET. Residues 47 to 58 show a composition bias toward acidic residues; sequence GGDEFASEENEP. 2 stretches are compositionally biased toward basic and acidic residues: residues 66–75 and 107–121; these read FGDKLNEHMM and ATDHRLPSSTDKEVV. 2 positions are modified to phosphoserine: serine 125 and serine 128. Residue threonine 130 is modified to Phosphothreonine. The span at 173-185 shows a compositional bias: basic and acidic residues; the sequence is VGPKDSLAPREEQ. A compositionally biased stretch (polar residues) spans 206–216; it reads IFSQATATPSQ. Positions 232 to 244 are enriched in low complexity; it reads SPSFSSTSETSAK. Serine 234, serine 309, and serine 314 each carry phosphoserine. 4 TPR repeats span residues 607–640, 642–675, 682–715, and 716–749; these read GRVLYSMANCLLLMKDYVLAVDAYLTVIKYYPEQ, PQLLSGIGRILLQIGDIKTAEKYFQDVEKVTQKL, IMVLMNRAFLYLGQNNFAEAHKFFTEILRMDPTN, and AVANNNAAVCLLYLGKLKDSLRQLEAMVQQDPRH.

As to quaternary structure, component of the multisubunit TRAPP (transport protein particle) complex, which includes at least TRAPPC2, TRAPPC2L, TRAPPC3, TRAPPC3L, TRAPPC4, TRAPPC5, TRAPPC8, TRAPPC9, TRAPPC10, TRAPPC11 and TRAPPC12. Interacts with CENPE. Phosphorylated as the cells enter mitosis but is dephosphorylated at or before the onset of anaphase. The phosphorylated form recruits CENPE to kinetochores more efficiently than the non-phosphorylated form.

It localises to the endoplasmic reticulum-Golgi intermediate compartment. The protein resides in the nucleus. Its function is as follows. Component of the TRAPP complex, which is involved in endoplasmic reticulum to Golgi apparatus trafficking at a very early stage. Also plays a role in chromosome congression, kinetochore assembly and stability and controls the recruitment of CENPE to the kinetochores. The chain is Trafficking protein particle complex subunit 12 from Mus musculus (Mouse).